The following is a 187-amino-acid chain: Putative AgrB-like protein 1 (187 aa).

The next 5 helical transmembrane spans lie at 29–49, 50–70, 81–98, 103–120, and 149–169; these read VVIV…IAGI, LGYF…KPFI, CFIA…LVTF, LFSI…IYNK, and ILFL…TITW.

Belongs to the AgrB family.

The protein resides in the cell membrane. In terms of biological role, may be involved in the proteolytic processing of a quorum sensing system signal molecule precursor. This is Putative AgrB-like protein 1 from Clostridium perfringens (strain 13 / Type A).